Consider the following 285-residue polypeptide: 4-diphosphocytidyl-2-C-methyl-D-erythritol kinase (285 aa).

Lysine 10 is a catalytic residue. ATP is bound at residue 94–104 (PVAAGLGGGSS). Aspartate 136 is an active-site residue.

Belongs to the GHMP kinase family. IspE subfamily.

The catalysed reaction is 4-CDP-2-C-methyl-D-erythritol + ATP = 4-CDP-2-C-methyl-D-erythritol 2-phosphate + ADP + H(+). It participates in isoprenoid biosynthesis; isopentenyl diphosphate biosynthesis via DXP pathway; isopentenyl diphosphate from 1-deoxy-D-xylulose 5-phosphate: step 3/6. Its function is as follows. Catalyzes the phosphorylation of the position 2 hydroxy group of 4-diphosphocytidyl-2C-methyl-D-erythritol. The sequence is that of 4-diphosphocytidyl-2-C-methyl-D-erythritol kinase from Latilactobacillus sakei subsp. sakei (strain 23K) (Lactobacillus sakei subsp. sakei).